The sequence spans 197 residues: Putative phosphopantothenoylcysteine decarboxylase (197 aa).

FMN is bound by residues phenylalanine 52 and 102–105 (SANT). Asparagine 139 provides a ligand contact to substrate. Cysteine 174 functions as the Proton donor in the catalytic mechanism.

This sequence belongs to the HFCD (homooligomeric flavin containing Cys decarboxylase) superfamily. As to quaternary structure, homotrimer. It depends on FMN as a cofactor.

The enzyme catalyses N-[(R)-4-phosphopantothenoyl]-L-cysteine + H(+) = (R)-4'-phosphopantetheine + CO2. It functions in the pathway cofactor biosynthesis; coenzyme A biosynthesis; CoA from (R)-pantothenate: step 3/5. Its function is as follows. Necessary for the biosynthesis of coenzyme A. Catalyzes the decarboxylation of 4-phosphopantothenoylcysteine to form 4'-phosphopantotheine. In Dictyostelium discoideum (Social amoeba), this protein is Putative phosphopantothenoylcysteine decarboxylase (ppcdc).